An 804-amino-acid polypeptide reads, in one-letter code: Leucine--tRNA ligase (804 aa).

Residues 39-50 (PYPSGKGLHVGH) carry the 'HIGH' region motif. The 'KMSKS' region motif lies at 573–577 (KMSKS). Lys-576 is a binding site for ATP.

Belongs to the class-I aminoacyl-tRNA synthetase family.

It is found in the cytoplasm. It catalyses the reaction tRNA(Leu) + L-leucine + ATP = L-leucyl-tRNA(Leu) + AMP + diphosphate. This chain is Leucine--tRNA ligase, found in Lactobacillus delbrueckii subsp. bulgaricus (strain ATCC BAA-365 / Lb-18).